The chain runs to 471 residues: Glycosyl hydrolase family 109 protein 1 (471 aa).

Residues 1–15 (MIKNLSTFFVGIALS) form the signal peptide. Cys16 carries the N-palmitoyl cysteine lipid modification. A lipid anchor (S-diacylglycerol cysteine) is attached at Cys16. NAD(+)-binding positions include 70–71 (MR), Asp92, 141–144 (WKHH), 161–162 (EV), and Asn190. Substrate contacts are provided by residues Tyr219, Arg235, 247-250 (YATH), and Tyr325. Tyr247 serves as a coordination point for NAD(+).

It belongs to the Gfo/Idh/MocA family. Glycosyl hydrolase 109 subfamily. Requires NAD(+) as cofactor.

The protein resides in the cell membrane. Its function is as follows. Glycosidase. The polypeptide is Glycosyl hydrolase family 109 protein 1 (Phocaeicola vulgatus (strain ATCC 8482 / DSM 1447 / JCM 5826 / CCUG 4940 / NBRC 14291 / NCTC 11154) (Bacteroides vulgatus)).